Reading from the N-terminus, the 329-residue chain is MPSALLIGEITHARKEWEELSSILTLTEFPSGTREDFIRNCKEGQYDDVLVIYRSNTSTKFTGPFDAELLAVLPKSLKYICHNGAGYDNIDVKGCTDKGIAVSSTPVAVNHATADVGIFLMIGALRQAYVPLSALRAGQWQGQTTLGRDPQGKVLGILGMGGIGREMANRAKAFGMKIQYHNRSRLSPELEGDATYVSFDELLASSDVLSLNLALNASTRHIIGEKEFQKMKDGIVIVNTARGALIDEKALVAALDSGKVLSAGLDVYENEPVVEQGLVNNPKVMLLPHIGTMTYETQKDMELLVLNNLRSAVEKGKMITLVPEQKNVF.

Residues 162–163 (GI), 240–242 (TAR), and D266 contribute to the NAD(+) site. The active site involves R242. E271 is an active-site residue. The active-site Proton donor is H289.

This sequence belongs to the D-isomer specific 2-hydroxyacid dehydrogenase family.

The enzyme catalyses (2R)-hydroxy-4-methylpentanoate + NADP(+) = 4-methyl-2-oxopentanoate + NADPH + H(+). It catalyses the reaction a (2R)-2-hydroxycarboxylate + NADP(+) = a 2-oxocarboxylate + NADPH + H(+). Functionally, 4-methyl-2-oxopentanoate (MOA) reductase that reduces MOA, a possible intermediate in leucine synthesis, to D-leucate in a NADPH- or NADH-dependent manner, but with a preference for NADPH. In addition to MOA, shows broad substrate specificity toward 2-keto acids. The sequence is that of 4-methyl-2-oxopentanoate reductase A from Aspergillus oryzae (strain ATCC 42149 / RIB 40) (Yellow koji mold).